A 54-amino-acid chain; its full sequence is Pars intercerebralis major peptide D1 (54 aa).

The protein belongs to the granulin family. Post-translationally, six disulfide bonds are present. In terms of tissue distribution, brain.

It localises to the secreted. The polypeptide is Pars intercerebralis major peptide D1 (Locusta migratoria (Migratory locust)).